Reading from the N-terminus, the 916-residue chain is Chitin synthase B (916 aa).

2 disordered regions span residues 1–75 (MAYH…GYSL) and 118–141 (ARSETSSTEAWRQRQAGAAGGGNG). The segment covering 14–26 (HTYDDGHQLRDLS) has biased composition (basic and acidic residues). Residues 59–75 (RGLTASPVQRPTSGYSL) are compositionally biased toward polar residues. The next 7 membrane-spanning stretches (helical) occupy residues 544 to 561 (RWLNGSFAAGIYSLMHFG), 588 to 608 (FLTWFSLASYWLTTSVIMDLV), 629 to 649 (IINTLVKYIYLAFLLLQFILA), 664 to 684 (SFVAFGIIQLYVVVDALYLVV), 716 to 736 (IIIIALAATFGLYFVASFMYL), 845 to 865 (LVTLWLFSNGLLAVCITSEGL), and 884 to 904 (ALLWSNAVVALIRFIGATWFL).

It belongs to the chitin synthase family. Class III subfamily. In terms of assembly, interacts with kibesin kinA. Post-translationally, activity requires trypsin activation, suggesting a zymogenic nature. Phosphorylated at yet unidentified residues in a N-terminal disordered region-dependent manner.

It localises to the cell membrane. The protein resides in the cell tip. The protein localises to the cell septum. The enzyme catalyses [(1-&gt;4)-N-acetyl-beta-D-glucosaminyl](n) + UDP-N-acetyl-alpha-D-glucosamine = [(1-&gt;4)-N-acetyl-beta-D-glucosaminyl](n+1) + UDP + H(+). Its activity is regulated as follows. Activity is stimulated by Mg(2+) and is inhibited by polyoxin D. Functionally, polymerizes chitin, a structural polymer of the cell wall and septum, by transferring the sugar moiety of UDP-GlcNAc to the non-reducing end of the growing chitin polymer. Does not substantially contribute to the rigidity of the cell wall but is necessary for normal hyphal growth and organization. In addition to its functions in the formation of normal cell walls of hyphae, is also involved in conidiophore and conidia development. The sequence is that of Chitin synthase B from Emericella nidulans (strain FGSC A4 / ATCC 38163 / CBS 112.46 / NRRL 194 / M139) (Aspergillus nidulans).